Here is a 270-residue protein sequence, read N- to C-terminus: Phthiotriol/phenolphthiotriol dimycocerosates methyltransferase (270 aa).

It belongs to the methyltransferase superfamily. Phthiotriol/phenolphthiotriol dimycocerosates methyltransferase family.

Its function is as follows. Catalyzes the methylation of the lipid moiety of the intermediate compounds phthiotriol and glycosylated phenolphthiotriol dimycoserosates to form phthiocerol dimycocerosates (DIM A) and glycosylated phenolphthiocerol dimycocerosates (PGL). The chain is Phthiotriol/phenolphthiotriol dimycocerosates methyltransferase from Mycobacterium leprae (strain TN).